A 395-amino-acid polypeptide reads, in one-letter code: Elongation factor Tu (395 aa).

Positions 10 to 204 constitute a tr-type G domain; that stretch reads KEHANIGTIG…AVDDYIPTPE (195 aa). Positions 19 to 26 are G1; the sequence is GHVDHGKT. A GTP-binding site is contributed by 19 to 26; it reads GHVDHGKT. Thr26 is a Mg(2+) binding site. The segment at 60–64 is G2; the sequence is GITIN. Residues 81–84 are G3; the sequence is DCPG. Residues 81–85 and 136–139 contribute to the GTP site; these read DCPGH and NKAD. Positions 136–139 are G4; it reads NKAD. Residues 174–176 are G5; it reads SAL.

Belongs to the TRAFAC class translation factor GTPase superfamily. Classic translation factor GTPase family. EF-Tu/EF-1A subfamily. As to quaternary structure, monomer.

It is found in the cytoplasm. It carries out the reaction GTP + H2O = GDP + phosphate + H(+). GTP hydrolase that promotes the GTP-dependent binding of aminoacyl-tRNA to the A-site of ribosomes during protein biosynthesis. This chain is Elongation factor Tu, found in Staphylococcus carnosus (strain TM300).